Reading from the N-terminus, the 901-residue chain is Putative receptor protein kinase CRINKLY4 (901 aa).

The signal sequence occupies residues M1–G24. Residues L25–R423 lie on the Extracellular side of the membrane. Tandem repeats lie at residues V33 to P68, F72 to Q107, L125 to E160, V162 to G195, F203 to P236, M253 to P287, and M292 to P330. The 7 X 36 AA repeats stretch occupies residues V33–P330. N-linked (GlcNAc...) asparagine glycans are attached at residues N151 and N179. An N-linked (GlcNAc...) asparagine glycan is attached at N282. Disulfide bonds link C338–C365, C368–C382, and C372–C390. One copy of the TNFR-Cys repeat lies at C357 to Q391. Residue N383 is glycosylated (N-linked (GlcNAc...) asparagine). The chain crosses the membrane as a helical span at residues I424–C444. The Cytoplasmic portion of the chain corresponds to L445–F901. Residues F505–D712 enclose the Protein kinase domain. ATP contacts are provided by residues V511–V519 and K533. The active-site Proton acceptor is the D634. Positions V845–G876 are disordered.

Belongs to the protein kinase superfamily. Ser/Thr protein kinase family. Homodimer.

It localises to the cell membrane. Its subcellular location is the endosome. The protein resides in the multivesicular body membrane. The enzyme catalyses L-seryl-[protein] + ATP = O-phospho-L-seryl-[protein] + ADP + H(+). It catalyses the reaction L-threonyl-[protein] + ATP = O-phospho-L-threonyl-[protein] + ADP + H(+). Its function is as follows. Putative receptor protein kinase. Could play a role in a differentiation signal. The CRINKLY4 (CR4) mutation affects leaf epidermis differentiation such that cell size and morphology are altered, and surface functions are compromised, allowing graft-like fusions between organs. In Zea mays (Maize), this protein is Putative receptor protein kinase CRINKLY4 (CR4).